The following is a 427-amino-acid chain: Trigger factor (427 aa).

Residues 160 to 240 enclose the PPIase FKBP-type domain; it reads TDTVIGDVVK…VKEVKRLELP (81 aa).

Belongs to the FKBP-type PPIase family. Tig subfamily.

Its subcellular location is the cytoplasm. It carries out the reaction [protein]-peptidylproline (omega=180) = [protein]-peptidylproline (omega=0). In terms of biological role, involved in protein export. Acts as a chaperone by maintaining the newly synthesized protein in an open conformation. Functions as a peptidyl-prolyl cis-trans isomerase. In Chlorobium limicola (strain DSM 245 / NBRC 103803 / 6330), this protein is Trigger factor.